Here is a 351-residue protein sequence, read N- to C-terminus: Actin maturation protease (351 aa).

A compositionally biased stretch (pro residues) spans 1 to 19 (MTSPCSPPLKPPISPPKTP). The disordered stretch occupies residues 1-70 (MTSPCSPPLK…PPAATGPAPR (70 aa)). The span at 36–50 (LDFSALPSPPWSQQT) shows a compositional bias: low complexity. Residues 51-64 (PVPPPLPLPPPPAA) show a composition bias toward pro residues. The peptidase C39-like stretch occupies residues 124–244 (SLIQEGPQCG…WAVSAGVLLG (121 aa)). Cys-132 is a catalytic residue. The residue at position 316 (Ser-316) is a Phosphoserine.

It belongs to the ACTMAP family. In terms of assembly, interacts (via N-terminus) with PFN2 isoforms IIa and IIb; the interactions may facilitate efficient cleavage of the acetylated N-terminus of immature actin. Interacts with PFN1.

It localises to the cytoplasm. The enzyme catalyses N-terminal N(alpha)-acetyl-L-methionyl-L-aspartyl-[protein] + H2O = N-terminal L-aspartyl-[protein] + N-acetyl-L-methionine. The catalysed reaction is N-terminal N(alpha)-acetyl-L-methionyl-L-glutamyl-[protein] + H2O = N-terminal L-glutamyl-[protein] + N-acetyl-L-methionine. It catalyses the reaction N-terminal N(alpha)-acetyl-L-cysteinyl-L-aspartyl-[protein] + H2O = N-terminal L-aspartyl-[protein] + N-acetyl-L-cysteine. It carries out the reaction N-terminal N(alpha)-acetyl-L-cysteinyl-L-glutamyl-[protein] + H2O = N-terminal L-glutamyl-[protein] + N-acetyl-L-cysteine. In terms of biological role, actin maturation protease that specifically mediates the cleavage of immature acetylated N-terminal actin, thereby contributing to actin maturation. Cleaves N-terminal acetylated methionine of immature cytoplasmic beta- and gamma-actins ACTB and ACTG1 after translation. Cleaves N-terminal acetylated cysteine of muscle alpha-actins ACTA1, ACTC1 and ACTA2 after canonical removal of N-terminal methionine. In Homo sapiens (Human), this protein is Actin maturation protease.